Reading from the N-terminus, the 365-residue chain is Poly(rC)-binding protein 2 (365 aa).

2 KH domains span residues 13-75 (TLTI…FAMI) and 97-162 (PVTL…VKQI). Lys-115 participates in a covalent cross-link: Glycyl lysine isopeptide (Lys-Gly) (interchain with G-Cter in SUMO2). Residue Ser-173 is modified to Phosphoserine. Residue Lys-185 forms a Glycyl lysine isopeptide (Lys-Gly) (interchain with G-Cter in SUMO2) linkage. Ser-189 and Ser-272 each carry phosphoserine. One can recognise a KH 3 domain in the interval 287 to 351 (TTSHELTIPN…ASISLAQYLI (65 aa)). Lys-322 is covalently cross-linked (Glycyl lysine isopeptide (Lys-Gly) (interchain with G-Cter in SUMO2)). Residues Ser-364 and Ser-365 each carry the phosphoserine modification.

Identified in a mRNP complex, at least composed of DHX9, DDX3X, ELAVL1, HNRNPU, IGF2BP1, ILF3, PABPC1, PCBP2, PTBP2, STAU1, STAU2, SYNCRIP and YBX1. Interacts with IFIH1 and RNF135. Interacts with MAVS (via C-terminus) and ITCH (via WW domains). Interacts with CGAS; preventing the formation of liquid-like droplets in which CGAS is activated. Post-translationally, phosphorylated. The non-phosphorylated form(s) exhibited the strongest poly(rC)-binding activity. (Microbial infection) Proteolytically cleaved by picornavirus proteinase 3CD. Detected in all tissues examined.

It is found in the nucleus. The protein resides in the cytoplasm. In terms of biological role, single-stranded nucleic acid binding protein that binds preferentially to oligo dC. Major cellular poly(rC)-binding protein. Also binds poly(rU). Acts as a negative regulator of antiviral signaling. Negatively regulates cellular antiviral responses mediated by MAVS signaling. It acts as an adapter between MAVS and the E3 ubiquitin ligase ITCH, therefore triggering MAVS ubiquitination and degradation. Negativeley regulates the cGAS-STING pathway via interaction with CGAS, preventing the formation of liquid-like droplets in which CGAS is activated. Together with PCBP1, required for erythropoiesis, possibly by regulating mRNA splicing. Functionally, (Microbial infection) In case of infection by poliovirus, binds to the viral internal ribosome entry site (IRES) and stimulates the IRES-mediated translation. Also plays a role in initiation of viral RNA replication in concert with the viral protein 3CD. This Homo sapiens (Human) protein is Poly(rC)-binding protein 2.